Reading from the N-terminus, the 329-residue chain is Glycosyltransferase family protein 64 C3 (329 aa).

The first 27 residues, 1-27 (MGVKSVRFSIWFLFVVTDLVFCRTLSG), serve as a signal peptide directing secretion. Residue N99 is glycosylated (N-linked (GlcNAc...) asparagine). Substrate-binding positions include 118 to 123 (SSLNAR), 139 to 141 (DDD), R169, 226 to 230 (RNCED), and 271 to 284 (VGLS…RKRR). Residue D141 coordinates Mn(2+). A disulfide bridge links C228 with C287. The active site involves D230. The interval 268-284 (VRDVGLSSRRVEHRKRR) is substrate binding.

This sequence belongs to the glycosyltransferase 64 family. Mn(2+) is required as a cofactor.

It functions in the pathway protein modification; protein glycosylation. Probable glycosyltransferase. The polypeptide is Glycosyltransferase family protein 64 C3 (Arabidopsis thaliana (Mouse-ear cress)).